The sequence spans 106 residues: Insulin-like peptide 04 (106 aa).

An N-terminal signal peptide occupies residues 1 to 22 (MPRTFLVVLIYILAGFLCSTSA). Positions 23 to 37 (LRKVNEASGIKTDGS) are excised as a propeptide. Disulfide bonds link Cys-45-Cys-50, Cys-46-Cys-80, and Cys-59-Cys-68. Residues 86–106 (RRKRSLTVDKREAKKFIRQRR) constitute a propeptide, c peptide.

The protein belongs to the insulin family.

It localises to the secreted. In terms of biological role, insulin decreases blood glucose concentration. May have evolved to activate insulin receptors (INSR) in vertebrates. Molecular docking studies reveals unique interaction with the human insulin receptor. In vivo, insulin-like peptide injection reduces blood glucose levels in two models of zebrafish diabetes (streptozotocin- and glucose-induced). Also shorter swimming distance of zebrafish larvae, an effect which is not observed with human insulin. The chain is Insulin-like peptide 04 from Exaiptasia diaphana (Tropical sea anemone).